We begin with the raw amino-acid sequence, 716 residues long: Fatty acid oxidation complex subunit alpha (716 aa).

Residues 1–189 are enoyl-CoA hydratase/isomerase; the sequence is MIYQSPTIQV…KVGAVDAVVA (189 aa). Aspartate 296 serves as a coordination point for substrate. A 3-hydroxyacyl-CoA dehydrogenase region spans residues 311 to 716; sequence KEVNNAAVLG…AANNGSYYQA (406 aa). Residues methionine 324, aspartate 343, 400-402, lysine 407, and serine 429 each bind NAD(+); that span reads VVE. The For 3-hydroxyacyl-CoA dehydrogenase activity role is filled by histidine 450. Asparagine 453 contributes to the NAD(+) binding site. The substrate site is built by asparagine 500 and tyrosine 660.

In the N-terminal section; belongs to the enoyl-CoA hydratase/isomerase family. The protein in the C-terminal section; belongs to the 3-hydroxyacyl-CoA dehydrogenase family. In terms of assembly, heterotetramer of two alpha chains (FadB) and two beta chains (FadA).

It carries out the reaction a (3S)-3-hydroxyacyl-CoA + NAD(+) = a 3-oxoacyl-CoA + NADH + H(+). The catalysed reaction is a (3S)-3-hydroxyacyl-CoA = a (2E)-enoyl-CoA + H2O. The enzyme catalyses a 4-saturated-(3S)-3-hydroxyacyl-CoA = a (3E)-enoyl-CoA + H2O. It catalyses the reaction (3S)-3-hydroxybutanoyl-CoA = (3R)-3-hydroxybutanoyl-CoA. It carries out the reaction a (3Z)-enoyl-CoA = a 4-saturated (2E)-enoyl-CoA. The catalysed reaction is a (3E)-enoyl-CoA = a 4-saturated (2E)-enoyl-CoA. Its pathway is lipid metabolism; fatty acid beta-oxidation. In terms of biological role, involved in the aerobic and anaerobic degradation of long-chain fatty acids via beta-oxidation cycle. Catalyzes the formation of 3-oxoacyl-CoA from enoyl-CoA via L-3-hydroxyacyl-CoA. It can also use D-3-hydroxyacyl-CoA and cis-3-enoyl-CoA as substrate. The protein is Fatty acid oxidation complex subunit alpha of Shewanella baltica (strain OS223).